A 323-amino-acid chain; its full sequence is tRNA N6-adenosine threonylcarbamoyltransferase (323 aa).

Fe cation contacts are provided by H110 and H114. Substrate is bound by residues 131–135 (VASGG), D164, G177, and N264. D288 lines the Fe cation pocket.

The protein belongs to the KAE1 / TsaD family. The cofactor is Fe(2+).

The protein localises to the cytoplasm. It carries out the reaction L-threonylcarbamoyladenylate + adenosine(37) in tRNA = N(6)-L-threonylcarbamoyladenosine(37) in tRNA + AMP + H(+). Its function is as follows. Required for the formation of a threonylcarbamoyl group on adenosine at position 37 (t(6)A37) in tRNAs that read codons beginning with adenine. Is involved in the transfer of the threonylcarbamoyl moiety of threonylcarbamoyl-AMP (TC-AMP) to the N6 group of A37, together with TsaE and TsaB. TsaD likely plays a direct catalytic role in this reaction. The sequence is that of tRNA N6-adenosine threonylcarbamoyltransferase from Thermus thermophilus (strain ATCC BAA-163 / DSM 7039 / HB27).